Here is a 179-residue protein sequence, read N- to C-terminus: Adenine phosphoribosyltransferase (179 aa).

Belongs to the purine/pyrimidine phosphoribosyltransferase family. Homodimer.

Its subcellular location is the cytoplasm. The catalysed reaction is AMP + diphosphate = 5-phospho-alpha-D-ribose 1-diphosphate + adenine. It functions in the pathway purine metabolism; AMP biosynthesis via salvage pathway; AMP from adenine: step 1/1. Catalyzes a salvage reaction resulting in the formation of AMP, that is energically less costly than de novo synthesis. This chain is Adenine phosphoribosyltransferase, found in Mycolicibacterium gilvum (strain PYR-GCK) (Mycobacterium gilvum (strain PYR-GCK)).